The primary structure comprises 205 residues: Superoxide dismutase [Mn] (205 aa).

Residues His30, His78, Asp166, and His170 each contribute to the Mn(2+) site.

It belongs to the iron/manganese superoxide dismutase family. Homodimer. Mn(2+) is required as a cofactor.

It catalyses the reaction 2 superoxide + 2 H(+) = H2O2 + O2. Destroys superoxide anion radicals which are normally produced within the cells and which are toxic to biological systems. This chain is Superoxide dismutase [Mn] (sodA), found in Chlamydia muridarum (strain MoPn / Nigg).